Reading from the N-terminus, the 613-residue chain is Chaperone protein DnaK (613 aa).

Residues 579-613 (MYQSASSTTQTGSGNQNSSKQENDKTVDAEYKEKS) are disordered. The span at 581–597 (QSASSTTQTGSGNQNSS) shows a compositional bias: low complexity. Positions 599-613 (QENDKTVDAEYKEKS) are enriched in basic and acidic residues.

The protein belongs to the heat shock protein 70 family.

Functionally, acts as a chaperone. This Thermoplasma volcanium (strain ATCC 51530 / DSM 4299 / JCM 9571 / NBRC 15438 / GSS1) protein is Chaperone protein DnaK.